The primary structure comprises 920 residues: Androgen receptor (920 aa).

The segment at 1–559 (MEVQLGLGRV…IDYYFPPQKT (559 aa)) is modulating. The segment at 1-587 (MEVQLGLGRV…GSCKVFFKRA (587 aa)) is interaction with ZNF318. Disordered regions lie at residues 36–167 (NPGP…LSLL) and 195–228 (QQQQ…YLGG). Positions 44–91 (AASAAPPGASLLLLQQQQQQQQQQQQQQQQQQQQQQQETSPRQQQQQQ) are enriched in low complexity. Position 83 is a phosphoserine; by CDK9 (serine 83). Serine 96 carries the phosphoserine modification. Low complexity predominate over residues 195–217 (QQQQQEAVSEGSSSGRAREASGA). Residues 218–228 (PTSSKDNYLGG) show a composition bias toward polar residues. The residue at position 225 (tyrosine 225) is a Phosphotyrosine; by CSK. Serine 258 bears the Phosphoserine mark. A Phosphotyrosine; by CSK and TNK2 modification is found at tyrosine 269. Residues tyrosine 309, tyrosine 348, tyrosine 359, and tyrosine 364 each carry the phosphotyrosine; by CSK modification. Tyrosine 365 is subject to Phosphotyrosine; by CSK and TNK2. A Glycyl lysine isopeptide (Lys-Gly) (interchain with G-Cter in SUMO) cross-link involves residue lysine 388. Tyrosine 395 is subject to Phosphotyrosine; by CSK. Residue lysine 521 forms a Glycyl lysine isopeptide (Lys-Gly) (interchain with G-Cter in SUMO) linkage. Phosphotyrosine; by CSK is present on residues tyrosine 535 and tyrosine 552. An interaction with LPXN region spans residues 552 to 919 (YYFPPQKTCL…GKVKPIYFHT (368 aa)). 2 consecutive NR C4-type zinc fingers follow at residues 560–580 (CLIC…CGSC) and 596–620 (CASR…LRKC). The nuclear receptor DNA-binding region spans 560–632 (CLICGDEASG…AGMTLGARKL (73 aa)). Residues 572–662 (YGALTCGSCK…TEETTQKLTV (91 aa)) form an interaction with HIPK3 region. The interaction with CCAR1 stretch occupies residues 592–919 (QKYLCASRND…GKVKPIYFHT (328 aa)). The interval 625–919 (MTLGARKLKK…GKVKPIYFHT (295 aa)) is interaction with KAT7. Serine 651 is subject to Phosphoserine; by STK4/MST1. The 232-residue stretch at 669–900 (ECQPIFLNVL…DFPEMMAEII (232 aa)) folds into the NR LBD domain. Positions 706 and 753 each coordinate 17beta-hydroxy-5alpha-androstan-3-one. Residues lysine 846 and lysine 848 each participate in a glycyl lysine isopeptide (Lys-Gly) (interchain with G-Cter in ubiquitin) cross-link. 17beta-hydroxy-5alpha-androstan-3-one is bound at residue threonine 878. Tyrosine 916 is subject to Phosphotyrosine; by CSK.

The protein belongs to the nuclear hormone receptor family. NR3 subfamily. As to quaternary structure, binds DNA as a homodimer. Part of a ternary complex containing AR, EFCAB6/DJBP and PARK7. Interacts with HIPK3 and NR0B2 in the presence of androgen. The ligand binding domain interacts with KAT7/HBO1 in the presence of dihydrotestosterone. Interacts with EFCAB6/DJBP, PQBP1, RANBP9, RBAK, SPDEF, SRA1, TGFB1I1 and RREB1. Interacts with ZMIZ1/ZIMP10 and ZMIZ2/ZMIP7 which both enhance its transactivation activity. Interacts with SLC30A9 and RAD54L2/ARIP4. Interacts with MACROD1 (via macro domain). Interacts via the ligand-binding domain with LXXLL and FXXLF motifs from NCOA1, NCOA2, NCOA3 and MAGEA11. Interacts (via nuclear receptor DNA binding domain and nuclear receptor ligand binding domain) with NCOA4. The AR N-terminal poly-Gln region binds Ran resulting in enhancement of AR-mediated transactivation. Ran-binding decreases as the poly-Gln length increases. Interacts with HIP1 (via coiled coil domain). Interacts (via ligand-binding domain) with TRIM68. Interacts with TNK2. Interacts with USP26. Interacts with RNF6. Interacts (regulated by RNF6 probably through polyubiquitination) with RNF14; regulates AR transcriptional activity. Interacts with PRMT2 and TRIM24. Interacts with RACK1. Interacts with RANBP10; this interaction enhances dihydrotestosterone-induced AR transcriptional activity. Interacts with PRPF6 in a hormone-independent way; this interaction enhances dihydrotestosterone-induced AR transcriptional activity. Interacts with STK4/MST1. Interacts with ZIPK/DAPK3. Interacts with LPXN. Interacts with MAK. Part of a complex containing AR, MAK and NCOA3. Interacts with CRY1. Interacts with CCAR1 and GATA2. Interacts with ZNF318. Interacts with BUD31. Interacts with ARID4A. Interacts with ARID4B. Interacts (via NR LBD domain) with ZBTB7A; the interaction is direct and androgen-dependent. Interacts with NCOR1. Interacts with NCOR2. Interacts with CRY2 in a ligand-dependent manner. Post-translationally, sumoylated on Lys-388 (major) and Lys-521. Ubiquitinated. Deubiquitinated by USP26. 'Lys-6' and 'Lys-27'-linked polyubiquitination by RNF6 modulates AR transcriptional activity and specificity. Phosphorylated in prostate cancer cells in response to several growth factors including EGF. Phosphorylation is induced by c-Src kinase (CSK). Tyr-535 is one of the major phosphorylation sites and an increase in phosphorylation and Src kinase activity is associated with prostate cancer progression. Phosphorylation by TNK2 enhances the DNA-binding and transcriptional activity and may be responsible for androgen-independent progression of prostate cancer. Phosphorylation at Ser-83 by CDK9 regulates AR promoter selectivity and cell growth. Phosphorylation by PAK6 leads to AR-mediated transcription inhibition. In terms of processing, palmitoylated by ZDHHC7 and ZDHHC21. Palmitoylation is required for plasma membrane targeting and for rapid intracellular signaling via ERK and AKT kinases and cAMP generation. As to expression, mainly expressed in heart and skeletal muscle. In terms of tissue distribution, expressed in basal and stromal cells of the prostate (at protein level).

It localises to the nucleus. Its subcellular location is the cytoplasm. With respect to regulation, AIM-100 (4-amino-5,6-biaryl-furo[2,3-d]pyrimidine) suppresses TNK2-mediated phosphorylation at Tyr-269. Inhibits the binding of the Tyr-269 phosphorylated form to androgen-responsive enhancers (AREs) and its transcriptional activity. Functionally, steroid hormone receptors are ligand-activated transcription factors that regulate eukaryotic gene expression and affect cellular proliferation and differentiation in target tissues. Transcription factor activity is modulated by bound coactivator and corepressor proteins like ZBTB7A that recruits NCOR1 and NCOR2 to the androgen response elements/ARE on target genes, negatively regulating androgen receptor signaling and androgen-induced cell proliferation. Transcription activation is also down-regulated by NR0B2. Activated, but not phosphorylated, by HIPK3 and ZIPK/DAPK3. Lacks the C-terminal ligand-binding domain and may therefore constitutively activate the transcription of a specific set of genes independently of steroid hormones. This chain is Androgen receptor (AR), found in Homo sapiens (Human).